A 132-amino-acid polypeptide reads, in one-letter code: ATP synthase epsilon chain (132 aa).

This sequence belongs to the ATPase epsilon chain family. In terms of assembly, F-type ATPases have 2 components, CF(1) - the catalytic core - and CF(0) - the membrane proton channel. CF(1) has five subunits: alpha(3), beta(3), gamma(1), delta(1), epsilon(1). CF(0) has three main subunits: a, b and c.

Its subcellular location is the cell inner membrane. In terms of biological role, produces ATP from ADP in the presence of a proton gradient across the membrane. In Anaeromyxobacter sp. (strain Fw109-5), this protein is ATP synthase epsilon chain.